The following is a 667-amino-acid chain: uncharacterized protein (667 aa).

Residues 321-345 (AGEAASSDHDQKISRVTRKRPREPK) are disordered. The 178-residue stretch at 375-552 (EIYMADTPSV…LQRIGLTGLA (178 aa)) folds into the Helicase ATP-binding domain. 388–395 (APPGYGKT) provides a ligand contact to ATP. A DEAH box motif is present at residues 498–501 (DEFH).

It belongs to the helicase family. Yeast subtelomeric Y' repeat subfamily.

This is an uncharacterized protein from Saccharomyces cerevisiae (strain ATCC 204508 / S288c) (Baker's yeast).